The chain runs to 335 residues: NADP(+)-dependent glycerol-3-phosphate dehydrogenase (335 aa).

Glycine 137 contributes to the sn-glycerol 3-phosphate binding site. Alanine 141 provides a ligand contact to NADPH. Residues lysine 192, aspartate 250, arginine 259, and asparagine 260 each coordinate sn-glycerol 3-phosphate. The active-site Proton acceptor is the lysine 192. Arginine 259 contributes to the NADPH binding site. The NADPH site is built by valine 287 and glutamate 289.

It belongs to the NAD-dependent glycerol-3-phosphate dehydrogenase family. Homodimer.

The protein resides in the cytoplasm. It carries out the reaction sn-glycerol 3-phosphate + NADP(+) = dihydroxyacetone phosphate + NADPH + H(+). In terms of biological role, catalyzes the reduction of the glycolytic intermediate dihydroxyacetone phosphate (DHAP) to sn-glycerol 3-phosphate (G3P). Shows a 15-fold preference for NADPH over NADH in the reduction process. Can also catalyze the reverse reaction in vitro. Shows no activity with dihydroxyacetone, glycerol, glycerol-2-phosphate, D-glyceraldehyde-3-phosphate, DL-glyceraldehyde, D-erythrose-4-phosphate, D-fructose-6-phosphate, beta-D-glucose-6-phosphate, or alpha-D-galactose-1-phosphate. The sequence is that of NADP(+)-dependent glycerol-3-phosphate dehydrogenase from Archaeoglobus fulgidus (strain ATCC 49558 / DSM 4304 / JCM 9628 / NBRC 100126 / VC-16).